A 260-amino-acid polypeptide reads, in one-letter code: Flap endonuclease Xni (260 aa).

Asp-112 is a binding site for Mg(2+). Residues 168–258 (LQPSQLVDFW…FNLKDLRYTP (91 aa)) enclose the 5'-3' exonuclease domain. K(+)-binding residues include Leu-179, Val-190, and Ile-193. The segment at 192-197 (GIGEKT) is interaction with DNA.

It belongs to the Xni family. Mg(2+) is required as a cofactor. The cofactor is K(+).

Has flap endonuclease activity. During DNA replication, flap endonucleases cleave the 5'-overhanging flap structure that is generated by displacement synthesis when DNA polymerase encounters the 5'-end of a downstream Okazaki fragment. The chain is Flap endonuclease Xni from Tolumonas auensis (strain DSM 9187 / NBRC 110442 / TA 4).